We begin with the raw amino-acid sequence, 41 residues long: Plantazolicin (41 aa).

A propeptide spanning residues Met1–Ala27 is cleaved from the precursor. The residue at position 28 (Arg28) is an N2,N2-dimethylarginine. The thiazole-4-carboxylic acid (Arg-Cys) cross-link spans Arg28–Cys29. Cross-links (5-methyloxazole-4-carboxylic acid (Cys-Thr)) lie at residues Cys29–Thr30 and Cys31–Thr32. The segment at residues Thr30–Cys31 is a cross-link (thiazole-4-carboxylic acid (Thr-Cys)). Positions Thr32–Thr33 form a cross-link, 5-methyloxazole-4-carboxylic acid (Thr-Thr). A cross-link (oxazole-4-carboxylic acid (Ile-Ser)) is located at residues Ile35–Ser36. 3 consecutive cross-links (oxazole-4-carboxylic acid (Ser-Ser)) follow at residues Ser36–Ser37, Ser37–Ser38, and Ser38–Ser39. Positions Ser39–Thr40 form a cross-link, 5-methyloxazoline-4-carboxylic acid (Ser-Thr).

Post-translationally, maturation of thiazole and oxazole containing antibiotics involves the enzymatic condensation of a Cys, Ser or Thr with the alpha-carbonyl of the preceding amino acid to form a thioether or ether bond, then dehydration to form a double bond with the alpha-amino nitrogen. Thiazoline or oxazoline ring are dehydrogenated to form thiazole or oxazole rings. In terms of processing, 2 forms exist: plantazolicin A and plantazolicin B. The structural difference between them is a dimethylation at Arg-28 in plantazolicin A.

Its subcellular location is the secreted. It is found in the cell wall. Peptide antibiotic inhibiting growth of Gram-positive bacteria in the dimethylated form plantazolicin A. The desmethyl form plantazolicin B has no antibiotic activity. The mode of action appears to be disruption of cell walls and lysis of cells. Inhibits B.subtilis strain HB0042, B.megaterium strain 7A1 and B.anthracis (MIC=2-4 ug/ml). Weakly inhibits Gram-positive bacteria B.brevis strain ATCC 8246, B.subtilis strain 168, B.cereus strain ATCC 14579 and strain CU1065, B.licheniformis strain ATCC 9789, M.luteus, B.sphaericus, P.granivorans and S.pyogenes (MIC=128 ug/ml). Does not inhibit B.pumilus, P.polymyxa, Arthrobacter sp., S.aureus, vancomycin-resistant E.faecalis, L.monocytogenes, methicillin-resistant S.aureus or Gram-negative bacteria E.coli strain K12, K.terrigena, Pseudomonas sp. and E.carotovora. In Bacillus velezensis (strain DSM 23117 / BGSC 10A6 / LMG 26770 / FZB42) (Bacillus amyloliquefaciens subsp. plantarum), this protein is Plantazolicin.